Reading from the N-terminus, the 412-residue chain is Serine hydroxymethyltransferase (412 aa).

(6S)-5,6,7,8-tetrahydrofolate contacts are provided by residues leucine 117 and 121 to 123; that span reads GHL. Residue lysine 226 is modified to N6-(pyridoxal phosphate)lysine.

This sequence belongs to the SHMT family. As to quaternary structure, homodimer. It depends on pyridoxal 5'-phosphate as a cofactor.

Its subcellular location is the cytoplasm. The enzyme catalyses (6R)-5,10-methylene-5,6,7,8-tetrahydrofolate + glycine + H2O = (6S)-5,6,7,8-tetrahydrofolate + L-serine. It functions in the pathway one-carbon metabolism; tetrahydrofolate interconversion. The protein operates within amino-acid biosynthesis; glycine biosynthesis; glycine from L-serine: step 1/1. In terms of biological role, catalyzes the reversible interconversion of serine and glycine with tetrahydrofolate (THF) serving as the one-carbon carrier. This reaction serves as the major source of one-carbon groups required for the biosynthesis of purines, thymidylate, methionine, and other important biomolecules. Also exhibits THF-independent aldolase activity toward beta-hydroxyamino acids, producing glycine and aldehydes, via a retro-aldol mechanism. The sequence is that of Serine hydroxymethyltransferase from Staphylococcus epidermidis (strain ATCC 35984 / DSM 28319 / BCRC 17069 / CCUG 31568 / BM 3577 / RP62A).